Reading from the N-terminus, the 31-residue chain is Phalloidin proprotein (31 aa).

The propeptide occupies methionine 1 to proline 10. The segment at residues alanine 11–proline 17 is a cross-link (cyclopeptide (Ala-Pro)). Residues tryptophan 12–cysteine 16 constitute a cross-link (2'-cysteinyl-6'-hydroxytryptophan sulfoxide (Trp-Cys)). Residues cysteine 18–glutamate 31 constitute a propeptide that is removed on maturation.

It belongs to the MSDIN fungal toxin family. Post-translationally, processed by the macrocyclase-peptidase enzyme POPB to yield a toxic cyclic heptapeptide. POPB first removes 10 residues from the N-terminus. Conformational trapping of the remaining peptide forces the enzyme to release this intermediate rather than proceed to macrocyclization. The enzyme rebinds the remaining peptide in a different conformation and catalyzes macrocyclization of the N-terminal 7 residues.

Functionally, major toxin that belongs to the bicyclic heptapeptides called phallotoxins. Although structurally related to amatoxins, phallotoxins have a different mode of action, which is the stabilization of F-actin. Phallotoxins are poisonous when administered parenterally, but not orally because of poor absorption. The sequence is that of Phalloidin proprotein from Amanita ocreata (Western North American destroying angel).